The primary structure comprises 435 residues: Glutamine synthetase (435 aa).

The 83-residue stretch at 12–94 (KSIKYFMISY…VAADCVMDDR (83 aa)) folds into the GS beta-grasp domain. A GS catalytic domain is found at 100–435 (PRVVLKRLVA…QWERDSTLDI (336 aa)). Mg(2+) is bound by residues Glu-123, Glu-125, Glu-180, and Glu-187. Gly-232 provides a ligand contact to L-glutamate. His-236 contributes to the Mg(2+) binding site. Position 240 (Ser-240) interacts with ATP. 2 residues coordinate L-glutamate: Arg-291 and Arg-315. Residues Arg-315 and Arg-320 each coordinate ATP. Glu-328 contributes to the Mg(2+) binding site. Arg-330 lines the L-glutamate pocket.

Belongs to the glutamine synthetase family. As to quaternary structure, homooctamer. The cofactor is Mg(2+).

The catalysed reaction is L-glutamate + NH4(+) + ATP = L-glutamine + ADP + phosphate + H(+). Catalyzes the ATP-dependent biosynthesis of glutamine from glutamate and ammonia. In Rhizobium leguminosarum bv. phaseoli, this protein is Glutamine synthetase.